A 458-amino-acid chain; its full sequence is uncharacterized protein (458 aa).

The 59-residue stretch at 8 to 66 folds into the TRAM domain; sequence PVEKNEFIDVVFEDLTHDGAGVAKVKGYPIFVKNGLPGEEAQIKIIKVKKNFAFGRLMK. Residues Cys79, Cys85, Cys88, and Cys166 each coordinate [4Fe-4S] cluster. The S-adenosyl-L-methionine site is built by Gln290, Tyr319, Glu340, and Asp388. Residue Cys415 is the Nucleophile of the active site.

This sequence belongs to the class I-like SAM-binding methyltransferase superfamily. RNA M5U methyltransferase family.

This is an uncharacterized protein from Bacillus cereus (strain ATCC 14579 / DSM 31 / CCUG 7414 / JCM 2152 / NBRC 15305 / NCIMB 9373 / NCTC 2599 / NRRL B-3711).